The following is a 639-amino-acid chain: UvrABC system protein C (639 aa).

A GIY-YIG domain is found at 20 to 97; that stretch reads ERSGVYRMFD…IKKFQPKFNI (78 aa). The region spanning 207-242 is the UVR domain; the sequence is KELQENLSRKMEELSSQMRFEEAAEIRDRIKALSYV.

Belongs to the UvrC family. As to quaternary structure, interacts with UvrB in an incision complex.

It is found in the cytoplasm. Functionally, the UvrABC repair system catalyzes the recognition and processing of DNA lesions. UvrC both incises the 5' and 3' sides of the lesion. The N-terminal half is responsible for the 3' incision and the C-terminal half is responsible for the 5' incision. This is UvrABC system protein C from Rickettsia peacockii (strain Rustic).